The chain runs to 558 residues: Dihydroxy-acid dehydratase (558 aa).

C50 lines the [2Fe-2S] cluster pocket. Residue D82 coordinates Mg(2+). C123 is a [2Fe-2S] cluster binding site. Mg(2+) contacts are provided by D124 and K125. At K125 the chain carries N6-carboxylysine. C195 contacts [2Fe-2S] cluster. E447 lines the Mg(2+) pocket. Catalysis depends on S472, which acts as the Proton acceptor.

It belongs to the IlvD/Edd family. Homodimer. The cofactor is [2Fe-2S] cluster. Requires Mg(2+) as cofactor.

The enzyme catalyses (2R)-2,3-dihydroxy-3-methylbutanoate = 3-methyl-2-oxobutanoate + H2O. It catalyses the reaction (2R,3R)-2,3-dihydroxy-3-methylpentanoate = (S)-3-methyl-2-oxopentanoate + H2O. It participates in amino-acid biosynthesis; L-isoleucine biosynthesis; L-isoleucine from 2-oxobutanoate: step 3/4. The protein operates within amino-acid biosynthesis; L-valine biosynthesis; L-valine from pyruvate: step 3/4. Functionally, functions in the biosynthesis of branched-chain amino acids. Catalyzes the dehydration of (2R,3R)-2,3-dihydroxy-3-methylpentanoate (2,3-dihydroxy-3-methylvalerate) into 2-oxo-3-methylpentanoate (2-oxo-3-methylvalerate) and of (2R)-2,3-dihydroxy-3-methylbutanoate (2,3-dihydroxyisovalerate) into 2-oxo-3-methylbutanoate (2-oxoisovalerate), the penultimate precursor to L-isoleucine and L-valine, respectively. The sequence is that of Dihydroxy-acid dehydratase from Saccharolobus islandicus (strain L.S.2.15 / Lassen #1) (Sulfolobus islandicus).